Here is a 415-residue protein sequence, read N- to C-terminus: MNVLVIGAGGREHALAYKLNQSNLVKQVFVIPGNEAMTPIAEVHTEISEPDHQAILDFAKRQNVDWVVIGPEQPLIDGLADILRANGFKVFGPNKQAAQIEGSKLFAKKIMEKYNIPTADYKEVERKKDALTYIENCELPVVVKKDGLAAGKGVIIADTIEAARSAIEIMYGDEEEGTVVFETFLEGEEFSLMTFVNGDLAVPFDCIAQDHKRAFDHDEGPNTGGMGAYCPVPHISDDVLKLTNETIAQPIAKAMLNEGYQFFGVLYIGAILTKDGPKVIEFNARFGDPEAQVLLSRMESDLMQHIIDLDEGKRTEFKWKNESIVGVMLASKGYPDAYEKGHKVSGFDLNENYFVSGLKKQGDTFVTSGGRVILAIGKGDNVQDAQRDAYKKVSQIQSDHLFYRHDIANKALQLK.

An ATP-grasp domain is found at 108 to 311; the sequence is KKIMEKYNIP…LMQHIIDLDE (204 aa). 134–191 is an ATP binding site; that stretch reads IENCELPVVVKKDGLAAGKGVIIADTIEAARSAIEIMYGDEEEGTVVFETFLEGEEFS. Glu-281 and Asn-283 together coordinate Mg(2+).

Belongs to the GARS family. It depends on Mg(2+) as a cofactor. Mn(2+) is required as a cofactor.

It catalyses the reaction 5-phospho-beta-D-ribosylamine + glycine + ATP = N(1)-(5-phospho-beta-D-ribosyl)glycinamide + ADP + phosphate + H(+). Its pathway is purine metabolism; IMP biosynthesis via de novo pathway; N(1)-(5-phospho-D-ribosyl)glycinamide from 5-phospho-alpha-D-ribose 1-diphosphate: step 2/2. In Staphylococcus aureus (strain COL), this protein is Phosphoribosylamine--glycine ligase.